We begin with the raw amino-acid sequence, 215 residues long: Protein HP-25 homolog 2 (215 aa).

The first 30 residues, 1–30 (MPGRGGQSLSMVCVDVWILALSVLSVMADA), serve as a signal peptide directing secretion. Residues 35 to 79 (VTESCDSQGPPGLPGPPGLPGPPGPPGPPGPPGLRGPTGIPGDIE) are disordered. The 34-residue stretch at 43-76 (GPPGLPGPPGLPGPPGPPGPPGPPGLRGPTGIPG) folds into the Collagen-like domain. The segment covering 45-68 (PGLPGPPGLPGPPGPPGPPGPPGL) has biased composition (pro residues). Residues 82 to 215 (LSPPKSAFAV…GYLLYGNYPG (134 aa)) form the C1q domain.

It localises to the secreted. This Bos taurus (Bovine) protein is Protein HP-25 homolog 2.